A 384-amino-acid polypeptide reads, in one-letter code: GTPase Obg (384 aa).

Residues M1–L159 form the Obg domain. Residues A20 to W46 are disordered. The segment covering G33–G43 has biased composition (gly residues). In terms of domain architecture, OBG-type G spans A160–T348. GTP-binding positions include G166–S173, F191–H195, D213–G216, N284–D287, and S329–L331. Residues S173 and T193 each contribute to the Mg(2+) site.

Belongs to the TRAFAC class OBG-HflX-like GTPase superfamily. OBG GTPase family. As to quaternary structure, monomer. Mg(2+) is required as a cofactor.

It is found in the cytoplasm. In terms of biological role, an essential GTPase which binds GTP, GDP and possibly (p)ppGpp with moderate affinity, with high nucleotide exchange rates and a fairly low GTP hydrolysis rate. Plays a role in control of the cell cycle, stress response, ribosome biogenesis and in those bacteria that undergo differentiation, in morphogenesis control. The polypeptide is GTPase Obg (Neisseria meningitidis serogroup B (strain ATCC BAA-335 / MC58)).